A 367-amino-acid chain; its full sequence is tRNA pseudouridine synthase D (367 aa).

The active-site Nucleophile is the Asp78. Residues 153–300 (GVPNYFGEQR…KQERRRIRLT (148 aa)) enclose the TRUD domain.

This sequence belongs to the pseudouridine synthase TruD family.

The catalysed reaction is uridine(13) in tRNA = pseudouridine(13) in tRNA. Its function is as follows. Responsible for synthesis of pseudouridine from uracil-13 in transfer RNAs. This is tRNA pseudouridine synthase D from Colwellia psychrerythraea (strain 34H / ATCC BAA-681) (Vibrio psychroerythus).